A 688-amino-acid polypeptide reads, in one-letter code: Telomere length regulation protein TEL2 (688 aa).

Phosphoserine occurs at positions 417 and 419.

It belongs to the TEL2 family. As to quaternary structure, component of the TTT complex composed of TEL2, TTI1 and TTI2. Interacts with TTI1 and TTI2.

It is found in the nucleus. Its subcellular location is the chromosome. It localises to the telomere. Functionally, part of the TTT complex that is required to stabilize protein levels of the phosphatidylinositol 3-kinase-related protein kinase (PIKK) family proteins. Required for telomere length regulation and telomere position effect. Regulates telomere length and participates in gene silencing at subtelomeric regions. Binds to telomeric DNA repeats. This Saccharomyces cerevisiae (strain ATCC 204508 / S288c) (Baker's yeast) protein is Telomere length regulation protein TEL2 (TEL2).